The following is a 290-amino-acid chain: Nucleotide-binding protein XfasM23_0667 (290 aa).

13–20 (GLSGSGKS) serves as a coordination point for ATP. 65 to 68 (DIRS) is a GTP binding site.

This sequence belongs to the RapZ-like family.

Its function is as follows. Displays ATPase and GTPase activities. In Xylella fastidiosa (strain M23), this protein is Nucleotide-binding protein XfasM23_0667.